The chain runs to 393 residues: Thyrotropin-releasing hormone receptor (393 aa).

At 1-28 (MENDTVSEMNQTELQPQAAVALEYQVVT) the chain is on the extracellular side. N-linked (GlcNAc...) asparagine glycans are attached at residues Asn3 and Asn10. The chain crosses the membrane as a helical span at residues 29–51 (ILLVVIICGLGIVGNIMVVLVVM). Over 52 to 61 (RTKHMRTPTN) the chain is Cytoplasmic. Residues 62–83 (CYLVSLAVADLMVLVAAGLPNI) traverse the membrane as a helical segment. The Extracellular segment spans residues 84 to 99 (TDSIYGSWVYGYVGCL). A disulfide bridge links Cys98 with Cys179. Residues 100-121 (CITYLQYLGINASSCSITAFTI) form a helical membrane-spanning segment. Residues 122 to 144 (ERYIAICHPIKAQFLCTFSRAKK) lie on the Cytoplasmic side of the membrane. Residues 145-168 (IIIFVWAFTSIYCMLWFFLLDLNI) form a helical membrane-spanning segment. At 169 to 193 (STYKNAVVVSCGYKISRNYYSPIYL) the chain is on the extracellular side. A helical transmembrane segment spans residues 194 to 215 (MDFGVFYVVPMILATVLYGFIA). Topologically, residues 216–266 (RILFLNPIPSDPKENSKMWKNDSIHQNKNLNLNATNRCFNSTVSSRKQVTK) are cytoplasmic. Residues 267–288 (MLAVVVILFALLWMPYRTLVVV) traverse the membrane as a helical segment. Topologically, residues 289 to 296 (NSFLSSPF) are extracellular. A helical membrane pass occupies residues 297 to 319 (QENWFLLFCRICIYLNSAINPVI). Topologically, residues 320-393 (YNLMSQKFRA…FDDTCLASEN (74 aa)) are cytoplasmic.

The protein belongs to the G-protein coupled receptor 1 family.

Its subcellular location is the cell membrane. Receptor for thyrotropin-releasing hormone (TRH). Upon ligand binding, this G-protein-coupled receptor triggers activation of the phosphatidylinositol (IP3)-calcium-protein kinase C (PKC) pathway. The protein is Thyrotropin-releasing hormone receptor (Trhr) of Mus musculus (Mouse).